We begin with the raw amino-acid sequence, 57 residues long: Potassium channel toxin MeuTXKalpha2 (57 aa).

The signal sequence occupies residues 1 to 19 (MSRLYAIILIALVFNVIMT). Residues 20–28 (IMPDMKVEA) constitute a propeptide that is removed on maturation. Disulfide bonds link Cys-31–Cys-47, Cys-34–Cys-52, and Cys-38–Cys-54.

The protein belongs to the short scorpion toxin superfamily. Potassium channel inhibitor family. Alpha-KTx 08 subfamily. In terms of tissue distribution, expressed by the venom gland.

It is found in the secreted. Functionally, inhibits Kv1.1/KCNA1, Kv1.3/KCNA3 and Shaker potassium channels. This chain is Potassium channel toxin MeuTXKalpha2, found in Mesobuthus eupeus (Lesser Asian scorpion).